We begin with the raw amino-acid sequence, 236 residues long: uncharacterized protein (236 aa).

Residues histidine 186–leucine 236 form a disordered region. A compositionally biased stretch (basic and acidic residues) spans glycine 201–leucine 236. Serine 221 is modified (phosphoserine).

This is an uncharacterized protein from Saccharomyces cerevisiae (strain ATCC 204508 / S288c) (Baker's yeast).